The sequence spans 727 residues: Glycerol-3-phosphate dehydrogenase, mitochondrial (727 aa).

Residues 1 to 42 constitute a mitochondrion transit peptide; sequence MAFQKVVKGTILMGGGALATVLGLSQFAHYRRKQVSLAYVEA. 71–99 lines the FAD pocket; it reads DILVIGGGATGCGCALDAVTRGLKTALVE. Phosphotyrosine is present on Y601. EF-hand domains are found at residues 623–658 and 659–694; these read PDID…INVQ and MDED…VHTG. Ca(2+) is bound by residues D672, N674, N676, Q678, and E683.

It belongs to the FAD-dependent glycerol-3-phosphate dehydrogenase family. Requires FAD as cofactor.

It is found in the mitochondrion. The catalysed reaction is a quinone + sn-glycerol 3-phosphate = dihydroxyacetone phosphate + a quinol. Its pathway is polyol metabolism; glycerol degradation via glycerol kinase pathway; glycerone phosphate from sn-glycerol 3-phosphate (anaerobic route): step 1/1. Its activity is regulated as follows. Calcium-binding enhance the activity of the enzyme. Calcium-responsive mitochondrial glycerol-3-phosphate dehydrogenase which seems to be a key component of the pancreatic beta-cell glucose-sensing device. In Rattus norvegicus (Rat), this protein is Glycerol-3-phosphate dehydrogenase, mitochondrial.